Here is a 388-residue protein sequence, read N- to C-terminus: NADPH-dependent butanol dehydrogenase (388 aa).

This sequence belongs to the iron-containing alcohol dehydrogenase family.

Its function is as follows. This enzyme has activity using butanol and ethanol as substrates. The protein is NADPH-dependent butanol dehydrogenase (adh1) of Clostridium saccharobutylicum.